The sequence spans 246 residues: Pyridoxine 5'-phosphate synthase (246 aa).

Asparagine 12 contacts 3-amino-2-oxopropyl phosphate. 14-15 provides a ligand contact to 1-deoxy-D-xylulose 5-phosphate; the sequence is DH. 3-amino-2-oxopropyl phosphate is bound at residue arginine 23. Histidine 48 (proton acceptor) is an active-site residue. 1-deoxy-D-xylulose 5-phosphate is bound by residues arginine 50 and histidine 55. The active-site Proton acceptor is glutamate 75. Threonine 105 is a 1-deoxy-D-xylulose 5-phosphate binding site. The active-site Proton donor is the histidine 196. 3-amino-2-oxopropyl phosphate is bound by residues glycine 197 and 218-219; that span reads GH.

The protein belongs to the PNP synthase family. In terms of assembly, homooctamer; tetramer of dimers.

The protein localises to the cytoplasm. It catalyses the reaction 3-amino-2-oxopropyl phosphate + 1-deoxy-D-xylulose 5-phosphate = pyridoxine 5'-phosphate + phosphate + 2 H2O + H(+). It participates in cofactor biosynthesis; pyridoxine 5'-phosphate biosynthesis; pyridoxine 5'-phosphate from D-erythrose 4-phosphate: step 5/5. Functionally, catalyzes the complicated ring closure reaction between the two acyclic compounds 1-deoxy-D-xylulose-5-phosphate (DXP) and 3-amino-2-oxopropyl phosphate (1-amino-acetone-3-phosphate or AAP) to form pyridoxine 5'-phosphate (PNP) and inorganic phosphate. The sequence is that of Pyridoxine 5'-phosphate synthase from Pseudomonas syringae pv. tomato (strain ATCC BAA-871 / DC3000).